The sequence spans 100 residues: MEQINIEIAYAYPHNHYLKSFTLDAGTTVQSAILQSGILAQYTDIDLRKNKIGIFARPVKLTDVLKNGDRIEIYRPLLADPKEIRRKRAAQQAARQKGKI.

This sequence belongs to the UPF0125 (RnfH) family.

The polypeptide is Protein RnfH (Actinobacillus succinogenes (strain ATCC 55618 / DSM 22257 / CCUG 43843 / 130Z)).